The following is a 214-amino-acid chain: uncharacterized protein (214 aa).

Residues Lys39–Asn68 adopt a coiled-coil conformation. The segment covering Glu99–Asp114 has biased composition (basic and acidic residues). The interval Glu99–Asp162 is disordered. The segment covering Ser123 to Asp162 has biased composition (acidic residues). The stretch at Leu138–Gly212 forms a coiled coil.

This is an uncharacterized protein from Archaeoglobus fulgidus (strain ATCC 49558 / DSM 4304 / JCM 9628 / NBRC 100126 / VC-16).